The chain runs to 260 residues: Indole-3-glycerol phosphate synthase (260 aa).

It belongs to the TrpC family.

The enzyme catalyses 1-(2-carboxyphenylamino)-1-deoxy-D-ribulose 5-phosphate + H(+) = (1S,2R)-1-C-(indol-3-yl)glycerol 3-phosphate + CO2 + H2O. It participates in amino-acid biosynthesis; L-tryptophan biosynthesis; L-tryptophan from chorismate: step 4/5. The chain is Indole-3-glycerol phosphate synthase from Lactiplantibacillus plantarum (strain ATCC BAA-793 / NCIMB 8826 / WCFS1) (Lactobacillus plantarum).